We begin with the raw amino-acid sequence, 442 residues long: tRNA modification GTPase MnmE (442 aa).

The (6S)-5-formyl-5,6,7,8-tetrahydrofolate site is built by Arg-22, Glu-79, and Lys-119. Residues 216-366 (GIKTCLVGAP…LLEKIKSIFA (151 aa)) enclose the TrmE-type G domain. Residue Asn-226 coordinates K(+). GTP contacts are provided by residues 226–231 (NSGKSS), 245–251 (SEIPGTT), and 270–273 (DTAG). Ser-230 is a Mg(2+) binding site. The K(+) site is built by Ser-245, Ile-247, and Thr-250. Thr-251 is a binding site for Mg(2+). (6S)-5-formyl-5,6,7,8-tetrahydrofolate is bound at residue Lys-442.

It belongs to the TRAFAC class TrmE-Era-EngA-EngB-Septin-like GTPase superfamily. TrmE GTPase family. In terms of assembly, homodimer. Heterotetramer of two MnmE and two MnmG subunits. Requires K(+) as cofactor.

It is found in the cytoplasm. In terms of biological role, exhibits a very high intrinsic GTPase hydrolysis rate. Involved in the addition of a carboxymethylaminomethyl (cmnm) group at the wobble position (U34) of certain tRNAs, forming tRNA-cmnm(5)s(2)U34. The sequence is that of tRNA modification GTPase MnmE from Mesomycoplasma hyopneumoniae (strain 7448) (Mycoplasma hyopneumoniae).